A 79-amino-acid polypeptide reads, in one-letter code: MQDVHTKSIACDGDLLPVLQENSISFQMLSLEMSGSFHSSPALENATITILHVSLLSFFRGIQAPCRGSPLLVTDSPGG.

This is an uncharacterized protein from Homo sapiens (Human).